The sequence spans 410 residues: Aspartic proteinase Asp1 (410 aa).

An N-terminal signal peptide occupies residues 1–23 (MTARLALLASLLLLLQLVPPSSA). The propeptide at 24 to 46 (VVLELHGNVYPIGHFFITMNIGD) is removed in mature form. The Peptidase A1 domain occupies 38–392 (FFITMNIGDP…DSERSLLGWV (355 aa)). Catalysis depends on residues D56 and D257.

It belongs to the peptidase A1 family.

The sequence is that of Aspartic proteinase Asp1 (ASP1) from Oryza sativa subsp. japonica (Rice).